The primary structure comprises 279 residues: Zinc-finger homeodomain protein 1 (279 aa).

Acidic residues predominate over residues Met-1 to Met-13. Positions Met-1–Val-47 are disordered. A ZF-HD dimerization-type; degenerate zinc finger spans residues Tyr-57–Glu-106. The tract at residues Arg-168 to Val-190 is disordered. The segment at residues Lys-215 to Leu-278 is a DNA-binding region (homeobox).

Homo- and heterodimer with other ZFHD proteins.

The protein localises to the nucleus. Its function is as follows. Putative transcription factor. This chain is Zinc-finger homeodomain protein 1 (ZHD1), found in Oryza sativa subsp. japonica (Rice).